Here is a 190-residue protein sequence, read N- to C-terminus: Large ribosomal subunit protein uL5 (190 aa).

Belongs to the universal ribosomal protein uL5 family. In terms of assembly, part of the 50S ribosomal subunit; part of the 5S rRNA/L5/L18/L25 subcomplex. Contacts the 5S rRNA and the P site tRNA. Forms a bridge to the 30S subunit in the 70S ribosome.

This is one of the proteins that bind and probably mediate the attachment of the 5S RNA into the large ribosomal subunit, where it forms part of the central protuberance. In the 70S ribosome it contacts protein S13 of the 30S subunit (bridge B1b), connecting the 2 subunits; this bridge is implicated in subunit movement. Contacts the P site tRNA; the 5S rRNA and some of its associated proteins might help stabilize positioning of ribosome-bound tRNAs. This is Large ribosomal subunit protein uL5 from Corynebacterium efficiens (strain DSM 44549 / YS-314 / AJ 12310 / JCM 11189 / NBRC 100395).